The primary structure comprises 80 residues: Large ribosomal subunit protein eL14 (80 aa).

Belongs to the eukaryotic ribosomal protein eL14 family.

This Methanocaldococcus jannaschii (strain ATCC 43067 / DSM 2661 / JAL-1 / JCM 10045 / NBRC 100440) (Methanococcus jannaschii) protein is Large ribosomal subunit protein eL14.